A 359-amino-acid polypeptide reads, in one-letter code: tRNA/tmRNA (uracil-C(5))-methyltransferase (359 aa).

Residues Gln183, Tyr211, Asn216, Glu232, and Asp292 each contribute to the S-adenosyl-L-methionine site. Cys317 serves as the catalytic Nucleophile. Glu351 functions as the Proton acceptor in the catalytic mechanism.

This sequence belongs to the class I-like SAM-binding methyltransferase superfamily. RNA M5U methyltransferase family. TrmA subfamily.

The catalysed reaction is uridine(54) in tRNA + S-adenosyl-L-methionine = 5-methyluridine(54) in tRNA + S-adenosyl-L-homocysteine + H(+). The enzyme catalyses uridine(341) in tmRNA + S-adenosyl-L-methionine = 5-methyluridine(341) in tmRNA + S-adenosyl-L-homocysteine + H(+). Dual-specificity methyltransferase that catalyzes the formation of 5-methyluridine at position 54 (m5U54) in all tRNAs, and that of position 341 (m5U341) in tmRNA (transfer-mRNA). The chain is tRNA/tmRNA (uracil-C(5))-methyltransferase from Pseudomonas fluorescens (strain ATCC BAA-477 / NRRL B-23932 / Pf-5).